A 174-amino-acid chain; its full sequence is Superoxide dismutase [Cu-Zn] (174 aa).

Residues 1–23 (MIRLSAAAALGLAAALAASPALA) form the signal peptide. The Cu cation site is built by His-68, His-70, and His-86. The cysteines at positions 75 and 170 are disulfide-linked. Residues His-86, His-95, Asp-104, and Asp-107 each coordinate Zn(2+). His-150 contributes to the Cu cation binding site.

Belongs to the Cu-Zn superoxide dismutase family. As to quaternary structure, homodimer. Cu cation serves as cofactor. It depends on Zn(2+) as a cofactor.

The protein localises to the periplasm. It catalyses the reaction 2 superoxide + 2 H(+) = H2O2 + O2. In terms of biological role, destroys radicals which are normally produced within the cells and which are toxic to biological systems. May function against extracytoplasmic toxic oxygen species. The chain is Superoxide dismutase [Cu-Zn] (sodC) from Caulobacter vibrioides (strain ATCC 19089 / CIP 103742 / CB 15) (Caulobacter crescentus).